Reading from the N-terminus, the 570-residue chain is Periplasmic trehalase (570 aa).

Residues M1 to A34 form the signal peptide. Residues R159, W166 to D167, N203, R212 to Q214, R284 to E286, and G317 each bind substrate. Active-site proton donor/acceptor residues include D319 and E503. E518 lines the substrate pocket. The tract at residues K544–Q570 is disordered. The segment covering P554–Q570 has biased composition (low complexity).

It belongs to the glycosyl hydrolase 37 family. As to quaternary structure, monomer.

The protein localises to the periplasm. It catalyses the reaction alpha,alpha-trehalose + H2O = alpha-D-glucose + beta-D-glucose. Its function is as follows. Provides the cells with the ability to utilize trehalose at high osmolarity by splitting it into glucose molecules that can subsequently be taken up by the phosphotransferase-mediated uptake system. The sequence is that of Periplasmic trehalase from Salmonella typhimurium (strain LT2 / SGSC1412 / ATCC 700720).